The sequence spans 222 residues: 2-C-methyl-D-erythritol 4-phosphate cytidylyltransferase (222 aa).

It belongs to the IspD/TarI cytidylyltransferase family. IspD subfamily.

The enzyme catalyses 2-C-methyl-D-erythritol 4-phosphate + CTP + H(+) = 4-CDP-2-C-methyl-D-erythritol + diphosphate. Its pathway is isoprenoid biosynthesis; isopentenyl diphosphate biosynthesis via DXP pathway; isopentenyl diphosphate from 1-deoxy-D-xylulose 5-phosphate: step 2/6. In terms of biological role, catalyzes the formation of 4-diphosphocytidyl-2-C-methyl-D-erythritol from CTP and 2-C-methyl-D-erythritol 4-phosphate (MEP). The protein is 2-C-methyl-D-erythritol 4-phosphate cytidylyltransferase of Thermotoga neapolitana (strain ATCC 49049 / DSM 4359 / NBRC 107923 / NS-E).